A 271-amino-acid chain; its full sequence is Exosome complex component Rrp42 (271 aa).

This sequence belongs to the RNase PH family. Rrp42 subfamily. Component of the archaeal exosome complex. Forms a hexameric ring-like arrangement composed of 3 Rrp41-Rrp42 heterodimers. The hexameric ring associates with a trimer of Rrp4 and/or Csl4 subunits.

It is found in the cytoplasm. Non-catalytic component of the exosome, which is a complex involved in RNA degradation. Contributes to the structuring of the Rrp41 active site. The chain is Exosome complex component Rrp42 from Methanothermobacter thermautotrophicus (strain ATCC 29096 / DSM 1053 / JCM 10044 / NBRC 100330 / Delta H) (Methanobacterium thermoautotrophicum).